Here is a 464-residue protein sequence, read N- to C-terminus: Protein ABHD18 (464 aa).

An N-terminal signal peptide occupies residues 1–24; that stretch reads MGVSKLDILYRRLLLTKLFIRGWG. Asparagine 341 carries an N-linked (GlcNAc...) asparagine glycan.

The protein belongs to the AB hydrolase superfamily.

Its subcellular location is the secreted. The chain is Protein ABHD18 from Rattus norvegicus (Rat).